We begin with the raw amino-acid sequence, 408 residues long: RNA exonuclease 4 (408 aa).

The interval 27-70 is disordered; the sequence is TKEKDVSNSKAHNSRSSQSPSSSLRSSSRIQRKSKHSQGVGQYM. The segment covering 40-55 has biased composition (low complexity); it reads SRSSQSPSSSLRSSSR. Residues 131-292 enclose the Exonuclease domain; the sequence is QYLAIDCEMV…YRLHKKEWER (162 aa). A compositionally biased stretch (basic and acidic residues) spans 310–322; the sequence is PEHVLGKRGHDEK. The interval 310-408 is disordered; sequence PEHVLGKRGH…GESWWEQPAA (99 aa). Positions 343–357 are enriched in gly residues; the sequence is GNGGGRQQFPGGGRK. The segment covering 372–384 has biased composition (basic and acidic residues); sequence QRVDENGRGDGTS.

The protein belongs to the REXO4 family.

The protein localises to the nucleus. Exoribonuclease involved in ribosome biosynthesis. Involved in the processing of ITS1, the internal transcribed spacer localized between the 18S and 5.8S rRNAs. This is RNA exonuclease 4 (REX4) from Cryptococcus neoformans var. neoformans serotype D (strain B-3501A) (Filobasidiella neoformans).